A 248-amino-acid polypeptide reads, in one-letter code: tRNA pseudouridine synthase A (248 aa).

Aspartate 55 acts as the Nucleophile in catalysis. Residue tyrosine 114 participates in substrate binding.

It belongs to the tRNA pseudouridine synthase TruA family. Homodimer.

It carries out the reaction uridine(38/39/40) in tRNA = pseudouridine(38/39/40) in tRNA. In terms of biological role, formation of pseudouridine at positions 38, 39 and 40 in the anticodon stem and loop of transfer RNAs. In Rhodopseudomonas palustris (strain ATCC BAA-98 / CGA009), this protein is tRNA pseudouridine synthase A.